The sequence spans 62 residues: Alpha-conotoxin-like Bn1.3 (62 aa).

The signal sequence occupies residues 1–18 (MGMRMMFTVFLLVVLATA). Positions 19 to 48 (VLPVTLDRASDGRNAAANAKTPRLIAPFIR) are excised as a propeptide. 2 disulfide bridges follow: Cys51–Cys57 and Cys52–Cys61. Cys61 is subject to Cysteine amide.

This sequence belongs to the conotoxin A superfamily. In terms of tissue distribution, expressed by the venom duct.

The protein localises to the secreted. Functionally, does not show activity on the acetylcholine receptors tested. The polypeptide is Alpha-conotoxin-like Bn1.3 (Conus bandanus (Banded marble cone)).